The following is a 462-amino-acid chain: tRNA modification GTPase MnmE (462 aa).

Arg-26, Glu-91, and Arg-130 together coordinate (6S)-5-formyl-5,6,7,8-tetrahydrofolate. Residues 228-382 (GLSTAKIGRP…IEERINDIFF (155 aa)) form the TrmE-type G domain. Asn-238 serves as a coordination point for K(+). GTP is bound by residues 238–243 (NVGKSQ), 257–263 (TDIEGTT), and 282–285 (DTAG). Ser-242 contacts Mg(2+). The K(+) site is built by Thr-257, Ile-259, and Thr-262. A Mg(2+)-binding site is contributed by Thr-263. Lys-462 serves as a coordination point for (6S)-5-formyl-5,6,7,8-tetrahydrofolate.

Belongs to the TRAFAC class TrmE-Era-EngA-EngB-Septin-like GTPase superfamily. TrmE GTPase family. In terms of assembly, homodimer. Heterotetramer of two MnmE and two MnmG subunits. K(+) serves as cofactor.

The protein resides in the cytoplasm. Functionally, exhibits a very high intrinsic GTPase hydrolysis rate. Involved in the addition of a carboxymethylaminomethyl (cmnm) group at the wobble position (U34) of certain tRNAs, forming tRNA-cmnm(5)s(2)U34. This is tRNA modification GTPase MnmE from Streptococcus agalactiae.